A 299-amino-acid chain; its full sequence is Large ribosomal subunit protein uL18 (299 aa).

Belongs to the universal ribosomal protein uL18 family. In terms of assembly, component of the large ribosomal subunit (LSU). Interacts with Fmr1 to form the RNA-induced silencing complex (RISC), a ribonucleoprotein (RNP) complex involved in translation regulation, other components of the complex are Rm62, RpL11, AGO2 and Dcr-1.

It is found in the cytoplasm. Its subcellular location is the nucleus. In terms of biological role, component of the ribosome, a large ribonucleoprotein complex responsible for the synthesis of proteins in the cell. The small ribosomal subunit (SSU) binds messenger RNAs (mRNAs) and translates the encoded message by selecting cognate aminoacyl-transfer RNA (tRNA) molecules. The large subunit (LSU) contains the ribosomal catalytic site termed the peptidyl transferase center (PTC), which catalyzes the formation of peptide bonds, thereby polymerizing the amino acids delivered by tRNAs into a polypeptide chain. The nascent polypeptides leave the ribosome through a tunnel in the LSU and interact with protein factors that function in enzymatic processing, targeting, and the membrane insertion of nascent chains at the exit of the ribosomal tunnel. The sequence is that of Large ribosomal subunit protein uL18 (RpL5) from Drosophila melanogaster (Fruit fly).